Here is a 42-residue protein sequence, read N- to C-terminus: Photosystem I reaction center subunit IX (42 aa).

The helical transmembrane segment at 7–27 (YLSVAPVLSTLWFGALAGLLI) threads the bilayer.

It belongs to the PsaJ family.

The protein resides in the plastid. It localises to the chloroplast thylakoid membrane. In terms of biological role, may help in the organization of the PsaE and PsaF subunits. In Agrostis stolonifera (Creeping bentgrass), this protein is Photosystem I reaction center subunit IX.